The primary structure comprises 218 residues: Ribose-5-phosphate isomerase A (218 aa).

Residues 28-31 (TGST), 81-84 (DGAD), and 94-97 (KGGG) each bind substrate. E103 acts as the Proton acceptor in catalysis. Residue K121 participates in substrate binding.

The protein belongs to the ribose 5-phosphate isomerase family. As to quaternary structure, homodimer.

The enzyme catalyses aldehydo-D-ribose 5-phosphate = D-ribulose 5-phosphate. The protein operates within carbohydrate degradation; pentose phosphate pathway; D-ribose 5-phosphate from D-ribulose 5-phosphate (non-oxidative stage): step 1/1. In terms of biological role, catalyzes the reversible conversion of ribose-5-phosphate to ribulose 5-phosphate. This is Ribose-5-phosphate isomerase A from Pseudoalteromonas atlantica (strain T6c / ATCC BAA-1087).